Here is a 448-residue protein sequence, read N- to C-terminus: Solute carrier family 52, riboflavin transporter, member 1 (448 aa).

The next 5 helical transmembrane spans lie at 14–34, 47–67, 79–99, 124–144, and 147–167; these read LLVALFGMGSWAAVNGIWVEL, LPSYLSVVVALGNLGLLVVTL, VPIQVVQVLSVVGTALLAPLW, ACCTSNVTFLPFLSHLPPPFL, and FFLGQGLSALLPCVLALVQGV. An N-linked (GlcNAc...) asparagine glycan is attached at N178. Residues 191–211 form a helical membrane-spanning segment; sequence FPASTFFWALTALLVTSAAAF. A disordered region spans residues 225–267; sequence TTGGSGPELQLGSPGAEEEEKEEEEALPLQEPPSQAAGTIPGP. The segment covering 240 to 250 has biased composition (acidic residues); the sequence is AEEEEKEEEEA. 5 consecutive transmembrane segments (helical) span residues 280–300, 315–335, 342–362, 369–389, and 407–427; these read AFLLGLMAFTSAVTNGVLPSV, LAVVLGSAANPLACFLAMGVL, LVGLSLLGMLFGAYLMALAIL, VGTTAGVVLVVLSWVLCLCVF, and ALLAAGVAIQVGSLLGAGAMF.

The protein belongs to the riboflavin transporter family. In terms of tissue distribution, widely expressed. Highly expressed in the testis, placenta and small intestine. Expressed at lower level in other tissues.

The protein localises to the cell membrane. It catalyses the reaction riboflavin(in) = riboflavin(out). With respect to regulation, the activity is strongly inhibited by riboflavin analogs, such as lumiflavin. Weakly inhibited by flavin adenine dinucleotide (FAD). Functionally, plasma membrane transporter mediating the uptake by cells of the water soluble vitamin B2/riboflavin that plays a key role in biochemical oxidation-reduction reactions of the carbohydrate, lipid, and amino acid metabolism. Humans are unable to synthesize vitamin B2/riboflavin and must obtain it via intestinal absorption. In terms of biological role, (Microbial infection) May function as a cell receptor to retroviral envelopes similar to the porcine endogenous retrovirus (PERV-A). The protein is Solute carrier family 52, riboflavin transporter, member 1 of Homo sapiens (Human).